We begin with the raw amino-acid sequence, 840 residues long: Probable alpha-glucuronidase A (840 aa).

Positions 1–19 (MRSVITTLTLVASVGLAVA) are cleaved as a signal peptide. 7 N-linked (GlcNAc...) asparagine glycosylation sites follow: N222, N310, N465, N527, N576, N682, and N732.

It belongs to the glycosyl hydrolase 67 family.

Its subcellular location is the secreted. The catalysed reaction is an alpha-D-glucuronoside + H2O = D-glucuronate + an alcohol. Its function is as follows. Alpha-glucuronidase involved in the hydrolysis of xylan, a major structural heterogeneous polysaccharide found in plant biomass representing the second most abundant polysaccharide in the biosphere, after cellulose. Releases 4-O-methylglucuronic acid from xylan. The sequence is that of Probable alpha-glucuronidase A (aguA) from Aspergillus clavatus (strain ATCC 1007 / CBS 513.65 / DSM 816 / NCTC 3887 / NRRL 1 / QM 1276 / 107).